The sequence spans 486 residues: MLKHKTFINRISHSIKHYLSFHVSIANLKKISFFISLFSCLTSGSIMLFSLFSSSLHELYGINYLHINFIASLSAIGMYLCLPVLGYLADCYGPSLLSLISIWFFVPSYFVNSQVIKSLEYNNVMKIHLYAFGICFFFIGLATSSLYFSSLLTCAKIYPEHKGLAISLPVTCYGLSTLLGSQLMKLSYFKQYNGFLNLHKVFNFFGVLYLVMGILNFVSSSVVSMESEIIFTNEDEMEEADEESPLMTSRSRHSHHSCEDDDNLIPERSIIEPLKHQERFINFLKDKSAWLLLASLILNIGPMESFQNNLGSIIINSNSESNLSDQVSIMAASSTVTRLAMGGLSDYLSSSKRKFPICRVNLLIINLAIGIVGQFMVTRSTRFSIVSILNGSSYGGLFTIYPTIVASIWGIDMMGSTWGSFMIAPAIGSIGFSIFYGNEVDNKCGVDYSSCLQHYFNLTAVGLSVSLILIIIVWKGIWAKRGYRVF.

6 helical membrane passes run 31-51 (ISFF…LFSL), 69-89 (FIAS…GYLA), 91-111 (CYGP…SYFV), 132-152 (FGIC…SSLL), 164-184 (LAIS…SQLM), and 204-224 (FFGV…SVVS). The disordered stretch occupies residues 236–260 (EMEEADEESPLMTSRSRHSHHSCED). Residues 280 to 300 (FINFLKDKSAWLLLASLILNI) form a helical membrane-spanning segment. N-linked (GlcNAc...) asparagine glycosylation is present at Asn322. Transmembrane regions (helical) follow at residues 327-348 (VSIM…SDYL) and 357-377 (ICRV…QFMV). Asn390 carries N-linked (GlcNAc...) asparagine glycosylation. A run of 2 helical transmembrane segments spans residues 395-415 (GGLF…DMMG) and 417-437 (TWGS…IFYG). Asn457 carries an N-linked (GlcNAc...) asparagine glycan. The helical transmembrane segment at 458 to 478 (LTAVGLSVSLILIIIVWKGIW) threads the bilayer.

The protein belongs to the major facilitator superfamily.

The protein resides in the vacuole membrane. Its function is as follows. Probable transporter. This is Probable transporter MCH1 (MCH1) from Debaryomyces hansenii (strain ATCC 36239 / CBS 767 / BCRC 21394 / JCM 1990 / NBRC 0083 / IGC 2968) (Yeast).